Consider the following 467-residue polypeptide: Matrix metalloproteinase-18 (467 aa).

An N-terminal signal peptide occupies residues 1–17 (MNSLLLKLLLCVAITAA). Positions 18–99 (FPADKQDEPP…PRCGVYDVGQ (82 aa)) are excised as a propeptide. Positions 90–97 (PRCGVYDV) match the Cysteine switch motif. 2 residues coordinate Zn(2+): C92 and H218. E219 is an active-site residue. 2 residues coordinate Zn(2+): H222 and H228. Hemopexin repeat units lie at residues 277–326 (PSRC…WPSL), 327–373 (PTNI…GFPK), 375–423 (VKRI…FPGI), and 424–467 (PDKI…WLGC). Residues C280 and C467 are joined by a disulfide bond.

The protein belongs to the peptidase M10A family. Zn(2+) serves as cofactor. Requires Ca(2+) as cofactor. Expressed only transiently in whole animal, at time when tadpole feeding begins.

It is found in the secreted. Its subcellular location is the extracellular space. The protein localises to the extracellular matrix. Up-regulated in the tail by thyroid hormone. Cleaves collagen type I. May play a role in larval tissue degeneration and adult organogenesis during amphibian metamorphosis. May be involved in tail resorption. This is Matrix metalloproteinase-18 (mmp18) from Xenopus laevis (African clawed frog).